The following is a 397-amino-acid chain: Ubiquitin-like modifier-activating enzyme 5 (397 aa).

ATP-binding residues include Gly-77, Asp-98, Lys-121, Asn-144, and Asn-178. Positions 220 and 223 each coordinate Zn(2+). Cys-244 (glycyl thioester intermediate) is an active-site residue. Residues Cys-297 and Cys-302 each contribute to the Zn(2+) site. Positions 329-341 (VVHEDNDWGIELV) match the UFM1-interacting sequence (UIS) motif. The interval 342-372 (SEVSEEELKAASGPVPDLPEGIKVAYTIPIT) is linker. A UFC1-binding sequence (UFC) motif is present at residues 382-397 (DSEQSLDELMAQMKNL).

This sequence belongs to the ubiquitin-activating E1 family. UBA5 subfamily. As to quaternary structure, homodimer; homodimerization is required for ufm1 activation. Interacts (via UIS motif) with ufm1; binds ufm1 via a trans-binding mechanism in which ufm1 interacts with distinct sites in both subunits of the uba5 homodimer. Interacts (via C-terminus) with ufc1.

Its subcellular location is the cytoplasm. The protein resides in the nucleus. It is found in the endoplasmic reticulum membrane. It localises to the golgi apparatus. In terms of biological role, E1-like enzyme which specifically catalyzes the first step in ufmylation. Activates ufm1 by first adenylating its C-terminal glycine residue with ATP, and thereafter linking this residue to the side chain of a cysteine residue in E1, yielding a ufm1-E1 thioester and free AMP. Activates ufm1 via a trans-binding mechanism, in which ufm1 interacts with distinct sites in both subunits of the uba5 homodimer. Trans-binding also promotes stabilization of the uba5 homodimer, and enhances ATP-binding. Transfer of ufm1 from uba5 to the E2-like enzyme UFC1 also takes place using a trans mechanism. Ufmylation plays a key role in various processes, such as ribosome recycling, response to DNA damage, interferon response or reticulophagy (also called ER-phagy). The chain is Ubiquitin-like modifier-activating enzyme 5 from Xenopus laevis (African clawed frog).